The sequence spans 453 residues: Chromosomal replication initiator protein DnaA (453 aa).

The domain I, interacts with DnaA modulators stretch occupies residues 1-73; it reads MELSPQDLWT…ADVVEEILGY (73 aa). A domain II region spans residues 73–110; the sequence is YSIDIQLTSTQGENIAIVGETQVSAYYPTLSGEHPKPI. The segment at 111 to 327 is domain III, AAA+ region; sequence KLNPKYTFSR…GALIRAITYI (217 aa). ATP-binding residues include Gly-155, Gly-157, Lys-158, and Thr-159. Residues 328–453 form a domain IV, binds dsDNA region; the sequence is SISGLSMTVE…HLASRTQKTT (126 aa).

The protein belongs to the DnaA family. As to quaternary structure, oligomerizes as a right-handed, spiral filament on DNA at oriC.

Its subcellular location is the cytoplasm. Plays an essential role in the initiation and regulation of chromosomal replication. ATP-DnaA binds to the origin of replication (oriC) to initiate formation of the DNA replication initiation complex once per cell cycle. Binds the DnaA box (a 9 base pair repeat at the origin) and separates the double-stranded (ds)DNA. Forms a right-handed helical filament on oriC DNA; dsDNA binds to the exterior of the filament while single-stranded (ss)DNA is stabiized in the filament's interior. The ATP-DnaA-oriC complex binds and stabilizes one strand of the AT-rich DNA unwinding element (DUE), permitting loading of DNA polymerase. After initiation quickly degrades to an ADP-DnaA complex that is not apt for DNA replication. Binds acidic phospholipids. The protein is Chromosomal replication initiator protein DnaA of Gloeothece citriformis (strain PCC 7424) (Cyanothece sp. (strain PCC 7424)).